A 153-amino-acid chain; its full sequence is Small heat shock protein HspB (153 aa).

In terms of domain architecture, sHSP spans 30–140 (AGTEDNYPPC…KPRRISISGS (111 aa)).

This sequence belongs to the small heat shock protein (HSP20) family.

The polypeptide is Small heat shock protein HspB (hspB) (Bradyrhizobium diazoefficiens (strain JCM 10833 / BCRC 13528 / IAM 13628 / NBRC 14792 / USDA 110)).